Here is a 332-residue protein sequence, read N- to C-terminus: GDP-mannose transporter 2 (332 aa).

Over 1-12 (MSSLKVSQQDKK) the chain is Cytoplasmic. The helical transmembrane segment at 13-33 (WVNSGSVAILAYCASSILMTI) threads the bilayer. The Lumenal segment spans residues 34 to 47 (TNKVVMSDRTFNMN). Residues 48 to 68 (FLLLFIQSLVCVITLLVLKVL) form a helical membrane-spanning segment. Residues 69–84 (GSVNFRSFNKTDARNW) are Cytoplasmic-facing. The helical transmembrane segment at 85–105 (FPISICLVLMIFTSSKSLQYL) threads the bilayer. Topologically, residues 106 to 108 (SVP) are lumenal. A helical membrane pass occupies residues 109–129 (VYTIFKNLTIIVIAYGEVLFF). The Cytoplasmic segment spans residues 130–131 (GS). A helical membrane pass occupies residues 132–152 (SVGNMELGSFALMIVSSLIAA). The Lumenal portion of the chain corresponds to 153–174 (HGDYLHSVERLKKMLGPNVSFS). N-linked (GlcNAc...) asparagine glycosylation occurs at Asn-170. Residues 175-195 (FIVNIGYFWIAANCFASALFV) traverse the membrane as a helical segment. Residues 196–211 (LLMRKRIQVTNFKDFD) are Cytoplasmic-facing. Residues 212–232 (TMFYNNVLSLPLLLLGSYLFE) traverse the membrane as a helical segment. The Lumenal portion of the chain corresponds to 233-248 (DWSQENLLPHVDIDNL). Asn-247 carries an N-linked (GlcNAc...) asparagine glycan. A helical transmembrane segment spans residues 249 to 269 (STMIISGLASVAISYCSGWCV). Topologically, residues 270–274 (RVTSS) are cytoplasmic. Residues 275-295 (TTYSMVGALNKLPIALTGFLF) traverse the membrane as a helical segment. The Lumenal segment spans residues 296-300 (NDAAR). A helical membrane pass occupies residues 301-321 (NLSSAASILLGFASGIIYAVA). Residues 322-332 (KQKKLQNSEKI) lie on the Cytoplasmic side of the membrane.

The protein belongs to the TPT transporter family. SLC35D subfamily. As to quaternary structure, homooligomer.

The protein localises to the golgi apparatus membrane. It localises to the cytoplasmic vesicle membrane. Its subcellular location is the endoplasmic reticulum membrane. In terms of biological role, involved in the import of GDP-mannose from the cytoplasm into the Golgi lumen. The chain is GDP-mannose transporter 2 (VRG4-2) from Vanderwaltozyma polyspora (strain ATCC 22028 / DSM 70294 / BCRC 21397 / CBS 2163 / NBRC 10782 / NRRL Y-8283 / UCD 57-17) (Kluyveromyces polysporus).